The sequence spans 286 residues: Phosphatidylglycerol--prolipoprotein diacylglyceryl transferase (286 aa).

The next 4 helical transmembrane spans lie at 25–45, 65–85, 103–123, and 127–147; these read WYAL…RMLL, FILW…VLFY, GGMS…LFGW, and VPIL…LFLG. Residue Arg-148 participates in a 1,2-diacyl-sn-glycero-3-phospho-(1'-sn-glycerol) binding. 3 helical membrane-spanning segments follow: residues 188–208, 212–232, and 248–268; these read AGLE…AGAL, GLII…GEFF, and MGML…ITTW.

This sequence belongs to the Lgt family.

It is found in the cell inner membrane. The catalysed reaction is L-cysteinyl-[prolipoprotein] + a 1,2-diacyl-sn-glycero-3-phospho-(1'-sn-glycerol) = an S-1,2-diacyl-sn-glyceryl-L-cysteinyl-[prolipoprotein] + sn-glycerol 1-phosphate + H(+). It functions in the pathway protein modification; lipoprotein biosynthesis (diacylglyceryl transfer). In terms of biological role, catalyzes the transfer of the diacylglyceryl group from phosphatidylglycerol to the sulfhydryl group of the N-terminal cysteine of a prolipoprotein, the first step in the formation of mature lipoproteins. The sequence is that of Phosphatidylglycerol--prolipoprotein diacylglyceryl transferase from Rhodopseudomonas palustris (strain ATCC BAA-98 / CGA009).